The following is a 164-amino-acid chain: MAKKEKKAKVATITTKSGESLKVFEELNDFETFLRGEVEDNEFDHVHCKAKYYPPFVLHESHDDPEKIKDTNNSHNKKFVRHLHQHVEKHLLKDIREMFQNPDLKFKNKSKEETFEKITWHYADESELNAKKFRIQLDVTCTHDGAMVDVDYRTEPIAAQEPVI.

The protein belongs to the RGI1 family.

It is found in the cytoplasm. Functionally, involved in the control of energetic metabolism and significantly contribute to cell fitness, especially under respiratory growth conditions. In Candida glabrata (strain ATCC 2001 / BCRC 20586 / JCM 3761 / NBRC 0622 / NRRL Y-65 / CBS 138) (Yeast), this protein is Respiratory growth induced protein 2 (RGI2).